We begin with the raw amino-acid sequence, 411 residues long: 2,3-bisphosphoglycerate-independent phosphoglycerate mutase (411 aa).

The protein belongs to the BPG-independent phosphoglycerate mutase family. A-PGAM subfamily. Homotetramer. Requires Mg(2+) as cofactor.

It carries out the reaction (2R)-2-phosphoglycerate = (2R)-3-phosphoglycerate. Its pathway is carbohydrate degradation; glycolysis; pyruvate from D-glyceraldehyde 3-phosphate: step 3/5. With respect to regulation, inhibited to approximately 20% by EDTA. Functionally, catalyzes the interconversion of 2-phosphoglycerate and 3-phosphoglycerate. In Pyrococcus furiosus (strain ATCC 43587 / DSM 3638 / JCM 8422 / Vc1), this protein is 2,3-bisphosphoglycerate-independent phosphoglycerate mutase (apgM).